Consider the following 367-residue polypeptide: tRNA 2-selenouridine synthase (367 aa).

Positions 15 to 138 constitute a Rhodanese domain; it reads FLQARPLIDV…LRTFLIQILE (124 aa). Catalysis depends on Cys98, which acts as the S-selanylcysteine intermediate.

The protein belongs to the SelU family. In terms of assembly, monomer.

It carries out the reaction 5-methylaminomethyl-2-thiouridine(34) in tRNA + selenophosphate + (2E)-geranyl diphosphate + H2O + H(+) = 5-methylaminomethyl-2-selenouridine(34) in tRNA + (2E)-thiogeraniol + phosphate + diphosphate. The catalysed reaction is 5-methylaminomethyl-2-thiouridine(34) in tRNA + (2E)-geranyl diphosphate = 5-methylaminomethyl-S-(2E)-geranyl-thiouridine(34) in tRNA + diphosphate. The enzyme catalyses 5-methylaminomethyl-S-(2E)-geranyl-thiouridine(34) in tRNA + selenophosphate + H(+) = 5-methylaminomethyl-2-(Se-phospho)selenouridine(34) in tRNA + (2E)-thiogeraniol. It catalyses the reaction 5-methylaminomethyl-2-(Se-phospho)selenouridine(34) in tRNA + H2O = 5-methylaminomethyl-2-selenouridine(34) in tRNA + phosphate. In terms of biological role, involved in the post-transcriptional modification of the uridine at the wobble position (U34) of tRNA(Lys), tRNA(Glu) and tRNA(Gln). Catalyzes the conversion of 2-thiouridine (S2U-RNA) to 2-selenouridine (Se2U-RNA). Acts in a two-step process involving geranylation of 2-thiouridine (S2U) to S-geranyl-2-thiouridine (geS2U) and subsequent selenation of the latter derivative to 2-selenouridine (Se2U) in the tRNA chain. In Shewanella denitrificans (strain OS217 / ATCC BAA-1090 / DSM 15013), this protein is tRNA 2-selenouridine synthase.